Consider the following 270-residue polypeptide: B3 domain-containing protein Os03g0212300 (270 aa).

2 DNA-binding regions (TF-B3) span residues phenylalanine 13–threonine 110 and valine 158–aspartate 265.

It localises to the nucleus. The polypeptide is B3 domain-containing protein Os03g0212300 (Oryza sativa subsp. japonica (Rice)).